The following is a 140-amino-acid chain: Large ribosomal subunit protein bL17 (140 aa).

Residues 121-140 (AAKGLDSGPTAEANDDDSEE) are disordered.

It belongs to the bacterial ribosomal protein bL17 family. Part of the 50S ribosomal subunit. Contacts protein L32.

The polypeptide is Large ribosomal subunit protein bL17 (Rhodospirillum rubrum (strain ATCC 11170 / ATH 1.1.1 / DSM 467 / LMG 4362 / NCIMB 8255 / S1)).